A 130-amino-acid polypeptide reads, in one-letter code: Small ribosomal subunit protein uS8 (130 aa).

This sequence belongs to the universal ribosomal protein uS8 family. Part of the 30S ribosomal subunit.

Functionally, one of the primary rRNA binding proteins, it binds directly to 16S rRNA central domain where it helps coordinate assembly of the platform of the 30S subunit. This Caldivirga maquilingensis (strain ATCC 700844 / DSM 13496 / JCM 10307 / IC-167) protein is Small ribosomal subunit protein uS8.